The primary structure comprises 239 residues: Putative HTH-type transcriptional regulator YkgA (239 aa).

An HTH araC/xylS-type domain is found at 19–117 (QQLLEWIECN…GCSPREYRHR (99 aa)). 2 DNA-binding regions (H-T-H motif) span residues 36 to 57 (EDIAQKSGYSRRNIQLLFRNFM) and 84 to 107 (MLDIALSLHFDSQQSFSREFKKLF).

This chain is Putative HTH-type transcriptional regulator YkgA (ykgA), found in Escherichia coli (strain K12).